The chain runs to 1273 residues: Probable methionine synthase (1273 aa).

The Hcy-binding domain maps to 7 to 327 (FKELADIAKE…DHINAMYKAV (321 aa)). Zn(2+) is bound by residues Cys249, Cys312, and Cys313. The region spanning 360 to 621 (FVNIGERCNV…IDKPLLQLLE (262 aa)) is the Pterin-binding domain. Residues 652–749 (KTDEWRNTSV…FMDAERQANI (98 aa)) enclose the B12-binding N-terminal domain. Methylcob(III)alamin contacts are provided by residues Glu699, 772–776 (GDVHD), His775, Ser820, Thr824, and Ala876. Residues 762-897 (QGTVVIATVK…DMTVRDAFLQ (136 aa)) enclose the B12-binding domain. The region spanning 927-1273 (SLKDRRFVAL…LSPIIGYELD (347 aa)) is the AdoMet activation domain. S-adenosyl-L-methionine contacts are provided by residues Asp977, Arg1171, and 1225–1226 (YF).

It belongs to the vitamin-B12 dependent methionine synthase family. Methylcob(III)alamin is required as a cofactor. The cofactor is Zn(2+).

The enzyme catalyses (6S)-5-methyl-5,6,7,8-tetrahydrofolate + L-homocysteine = (6S)-5,6,7,8-tetrahydrofolate + L-methionine. It participates in amino-acid biosynthesis; L-methionine biosynthesis via de novo pathway; L-methionine from L-homocysteine (MetH route): step 1/1. In terms of biological role, catalyzes the transfer of a methyl group from methyl-cobalamin to homocysteine, yielding enzyme-bound cob(I)alamin and methionine. Subsequently, remethylates the cofactor using methyltetrahydrofolate. The protein is Probable methionine synthase (metr-1) of Caenorhabditis briggsae.